A 199-amino-acid polypeptide reads, in one-letter code: Ribonuclease P protein component 3 (199 aa).

The protein belongs to the eukaryotic/archaeal RNase P protein component 3 family. Consists of a catalytic RNA component and at least 4-5 protein subunits.

The protein resides in the cytoplasm. The enzyme catalyses Endonucleolytic cleavage of RNA, removing 5'-extranucleotides from tRNA precursor.. Its function is as follows. Part of ribonuclease P, a protein complex that generates mature tRNA molecules by cleaving their 5'-ends. The sequence is that of Ribonuclease P protein component 3 from Archaeoglobus fulgidus (strain ATCC 49558 / DSM 4304 / JCM 9628 / NBRC 100126 / VC-16).